The primary structure comprises 1418 residues: JmjC domain-containing histone demethylation protein 1 (1418 aa).

3 disordered regions span residues 1 to 86 (MIGA…SSST), 102 to 162 (APLS…STFD), and 308 to 329 (GADR…SDEN). A compositionally biased stretch (basic and acidic residues) spans 44–60 (WIDRGDSQAASYDRDRV). A compositionally biased stretch (polar residues) spans 61–71 (TSNNDVYSSTN). The span at 127–139 (STERPAKRPRSEK) shows a compositional bias: basic and acidic residues. Over residues 143-162 (PLHQPQTTVAPDANPSSTFD) the composition is skewed to polar residues. Residues 308 to 321 (GADRASLDVPPRGD) are compositionally biased toward basic and acidic residues. The PHD-type zinc-finger motif lies at 331–391 (QANCAACNLV…KFICRRCRPI (61 aa)). In terms of domain architecture, JmjC spans 588-746 (VSQSKLGKLI…MQIKVAKIEK (159 aa)). Position 639 (Thr-639) interacts with substrate. Positions 642 and 644 each coordinate Fe cation. Residue Lys-659 participates in substrate binding. Residue His-714 participates in Fe cation binding. 4 disordered regions span residues 891 to 964 (PQWT…TVEI), 1090 to 1118 (NAAT…CDDC), 1130 to 1195 (YGRI…HTQR), and 1250 to 1394 (KPTA…DEPD). Basic and acidic residues predominate over residues 907-925 (LTEKKPAGRPSRRSERNAE). Composition is skewed to basic and acidic residues over residues 1130–1143 (YGRI…ERSK) and 1186–1195 (AEGDMSHTQR). Polar residues predominate over residues 1250–1263 (KPTASLVSPPTSQA). Low complexity predominate over residues 1341 to 1352 (SSKKPASRPSSS).

It belongs to the JHDM1 histone demethylase family. It depends on Fe(2+) as a cofactor.

Its subcellular location is the nucleus. It catalyses the reaction N(6),N(6)-dimethyl-L-lysyl(36)-[histone H3] + 2 2-oxoglutarate + 2 O2 = L-lysyl(36)-[histone H3] + 2 formaldehyde + 2 succinate + 2 CO2. Histone demethylase that specifically demethylates 'Lys-36' of histone H3, thereby playing a central role in histone code. In Aspergillus fumigatus (strain ATCC MYA-4609 / CBS 101355 / FGSC A1100 / Af293) (Neosartorya fumigata), this protein is JmjC domain-containing histone demethylation protein 1 (jhd1).